The chain runs to 224 residues: Uracil-DNA glycosylase (224 aa).

The active-site Proton acceptor is Asp-64.

This sequence belongs to the uracil-DNA glycosylase (UDG) superfamily. UNG family.

Its subcellular location is the cytoplasm. It catalyses the reaction Hydrolyzes single-stranded DNA or mismatched double-stranded DNA and polynucleotides, releasing free uracil.. Excises uracil residues from the DNA which can arise as a result of misincorporation of dUMP residues by DNA polymerase or due to deamination of cytosine. The polypeptide is Uracil-DNA glycosylase (Clostridioides difficile (strain 630) (Peptoclostridium difficile)).